The primary structure comprises 226 residues: Lipoprotein-releasing system ATP-binding protein LolD (226 aa).

Residues 5-226 (LKATNINKIY…LLRNGHWENY (222 aa)) form the ABC transporter domain. 41–48 (GTSGSGKS) provides a ligand contact to ATP.

Belongs to the ABC transporter superfamily. Lipoprotein translocase (TC 3.A.1.125) family. In terms of assembly, the complex is composed of two ATP-binding proteins (LolD) and two transmembrane proteins (LolC and LolE).

It localises to the cell inner membrane. Part of the ABC transporter complex LolCDE involved in the translocation of mature outer membrane-directed lipoproteins, from the inner membrane to the periplasmic chaperone, LolA. Responsible for the formation of the LolA-lipoprotein complex in an ATP-dependent manner. The polypeptide is Lipoprotein-releasing system ATP-binding protein LolD (Psychrobacter arcticus (strain DSM 17307 / VKM B-2377 / 273-4)).